A 242-amino-acid polypeptide reads, in one-letter code: Orotidine 5'-phosphate decarboxylase (242 aa).

Substrate contacts are provided by residues Asp-16, Lys-37, 64–73 (DLKFHDIPNT), Thr-128, Arg-190, Gln-199, Gly-219, and Arg-220. The Proton donor role is filled by Lys-66.

This sequence belongs to the OMP decarboxylase family. Type 1 subfamily. In terms of assembly, homodimer.

The enzyme catalyses orotidine 5'-phosphate + H(+) = UMP + CO2. Its pathway is pyrimidine metabolism; UMP biosynthesis via de novo pathway; UMP from orotate: step 2/2. Catalyzes the decarboxylation of orotidine 5'-monophosphate (OMP) to uridine 5'-monophosphate (UMP). This Prochlorococcus marinus (strain AS9601) protein is Orotidine 5'-phosphate decarboxylase.